Here is a 427-residue protein sequence, read N- to C-terminus: 3-phosphoshikimate 1-carboxyvinyltransferase (427 aa).

3-phosphoshikimate is bound by residues Lys-22, Ser-23, and Arg-27. A phosphoenolpyruvate-binding site is contributed by Lys-22. The phosphoenolpyruvate site is built by Gly-96 and Arg-124. Residues Ser-169, Ser-170, Gln-171, Ser-197, Asp-313, Asn-336, and Lys-340 each contribute to the 3-phosphoshikimate site. Residue Gln-171 coordinates phosphoenolpyruvate. Asp-313 (proton acceptor) is an active-site residue. Positions 344, 386, and 411 each coordinate phosphoenolpyruvate.

This sequence belongs to the EPSP synthase family. Monomer.

Its subcellular location is the cytoplasm. It catalyses the reaction 3-phosphoshikimate + phosphoenolpyruvate = 5-O-(1-carboxyvinyl)-3-phosphoshikimate + phosphate. The protein operates within metabolic intermediate biosynthesis; chorismate biosynthesis; chorismate from D-erythrose 4-phosphate and phosphoenolpyruvate: step 6/7. Its function is as follows. Catalyzes the transfer of the enolpyruvyl moiety of phosphoenolpyruvate (PEP) to the 5-hydroxyl of shikimate-3-phosphate (S3P) to produce enolpyruvyl shikimate-3-phosphate and inorganic phosphate. The polypeptide is 3-phosphoshikimate 1-carboxyvinyltransferase (Salmonella heidelberg (strain SL476)).